The sequence spans 103 residues: MAGARRRARCPASAGCAYSARPPPLSTRGRRISAGSGQPRWWPWGSPPPPDTRYRRPGPGRRARSCLHAGPRGRPPHSRTRARRTSPGAGGGGWRGGSCTSQR.

Positions 1–103 (MAGARRRARC…WRGGSCTSQR (103 aa)) are disordered. Over residues 35–44 (GSGQPRWWPW) the composition is skewed to low complexity. Composition is skewed to basic residues over residues 55–65 (RRPGPGRRARS) and 74–84 (RPPHSRTRARR).

This sequence belongs to the epstein-barr virus RPMS1 family.

This is an uncharacterized protein from Homo sapiens (Human).